Here is a 396-residue protein sequence, read N- to C-terminus: Tryptophan synthase beta chain (396 aa).

Position 96 is an N6-(pyridoxal phosphate)lysine (K96).

Belongs to the TrpB family. In terms of assembly, tetramer of two alpha and two beta chains. It depends on pyridoxal 5'-phosphate as a cofactor.

It catalyses the reaction (1S,2R)-1-C-(indol-3-yl)glycerol 3-phosphate + L-serine = D-glyceraldehyde 3-phosphate + L-tryptophan + H2O. Its pathway is amino-acid biosynthesis; L-tryptophan biosynthesis; L-tryptophan from chorismate: step 5/5. In terms of biological role, the beta subunit is responsible for the synthesis of L-tryptophan from indole and L-serine. This is Tryptophan synthase beta chain from Azobacteroides pseudotrichonymphae genomovar. CFP2.